We begin with the raw amino-acid sequence, 572 residues long: Proline--tRNA ligase (572 aa).

This sequence belongs to the class-II aminoacyl-tRNA synthetase family. ProS type 1 subfamily. As to quaternary structure, homodimer.

It localises to the cytoplasm. The enzyme catalyses tRNA(Pro) + L-proline + ATP = L-prolyl-tRNA(Pro) + AMP + diphosphate. Its function is as follows. Catalyzes the attachment of proline to tRNA(Pro) in a two-step reaction: proline is first activated by ATP to form Pro-AMP and then transferred to the acceptor end of tRNA(Pro). As ProRS can inadvertently accommodate and process non-cognate amino acids such as alanine and cysteine, to avoid such errors it has two additional distinct editing activities against alanine. One activity is designated as 'pretransfer' editing and involves the tRNA(Pro)-independent hydrolysis of activated Ala-AMP. The other activity is designated 'posttransfer' editing and involves deacylation of mischarged Ala-tRNA(Pro). The misacylated Cys-tRNA(Pro) is not edited by ProRS. The sequence is that of Proline--tRNA ligase from Alteromonas mediterranea (strain DSM 17117 / CIP 110805 / LMG 28347 / Deep ecotype).